Here is an 81-residue protein sequence, read N- to C-terminus: Putative snRNP Sm-like protein (81 aa).

The region spanning 13 to 81 (RPLDALGNSL…RGDNIVYISP (69 aa)) is the Sm domain.

The protein belongs to the snRNP Sm proteins family.

This chain is Putative snRNP Sm-like protein, found in Methanothermobacter thermautotrophicus (strain ATCC 29096 / DSM 1053 / JCM 10044 / NBRC 100330 / Delta H) (Methanobacterium thermoautotrophicum).